The sequence spans 300 residues: Inosose dehydratase (300 aa).

Belongs to the IolE/MocC family. Glutathione serves as cofactor. The cofactor is Co(2+). Requires Mn(2+) as cofactor.

It catalyses the reaction scyllo-inosose = 3D-3,5/4-trihydroxycyclohexane-1,2-dione + H2O. Functionally, catalyzes the dehydration of inosose (2-keto-myo-inositol, 2KMI or 2,4,6/3,5-pentahydroxycyclohexanone) to 3D-(3,5/4)-trihydroxycyclohexane-1,2-dione (D-2,3-diketo-4-deoxy-epi-inositol). This Mesomycoplasma hyopneumoniae (strain 232) (Mycoplasma hyopneumoniae) protein is Inosose dehydratase.